Reading from the N-terminus, the 599-residue chain is Elongation factor 4 (599 aa).

The 183-residue stretch at 5–187 folds into the tr-type G domain; the sequence is SHIRNFSIIA…RLVHTIPAPV (183 aa). GTP is bound by residues 17-22 and 134-137; these read DHGKST and NKMD.

The protein belongs to the TRAFAC class translation factor GTPase superfamily. Classic translation factor GTPase family. LepA subfamily.

The protein resides in the cell inner membrane. It catalyses the reaction GTP + H2O = GDP + phosphate + H(+). Required for accurate and efficient protein synthesis under certain stress conditions. May act as a fidelity factor of the translation reaction, by catalyzing a one-codon backward translocation of tRNAs on improperly translocated ribosomes. Back-translocation proceeds from a post-translocation (POST) complex to a pre-translocation (PRE) complex, thus giving elongation factor G a second chance to translocate the tRNAs correctly. Binds to ribosomes in a GTP-dependent manner. In Pseudomonas putida (strain W619), this protein is Elongation factor 4.